The sequence spans 445 residues: Putative MgpC-like protein MPN_464 (445 aa).

The segment at 23–44 (STTVAVQKSDSSGSQGQGTTDN) is disordered. Residues 31-43 (SDSSGSQGQGTTD) show a composition bias toward low complexity.

It belongs to the MgpC family.

This is Putative MgpC-like protein MPN_464 from Mycoplasma pneumoniae (strain ATCC 29342 / M129 / Subtype 1) (Mycoplasmoides pneumoniae).